The chain runs to 761 residues: Phosphoribosylformylglycinamidine synthase subunit PurL (761 aa).

Residues 1–13 (MTSRVDTVDNAAS) show a composition bias toward polar residues. Residues 1–23 (MTSRVDTVDNAASTPDHPQPFAE) are disordered. Residue H57 is part of the active site. ATP is bound by residues Y60 and K104. E106 contacts Mg(2+). Residues 107 to 110 (SHNH) and R129 each bind substrate. H108 serves as the catalytic Proton acceptor. D130 provides a ligand contact to Mg(2+). Position 259 (Q259) interacts with substrate. D287 serves as a coordination point for Mg(2+). 331 to 333 (ESQ) contributes to the substrate binding site. Residues N519 and G556 each contribute to the ATP site. N557 is a Mg(2+) binding site. S559 contacts substrate.

Belongs to the FGAMS family. Monomer. Part of the FGAM synthase complex composed of 1 PurL, 1 PurQ and 2 PurS subunits.

It localises to the cytoplasm. It catalyses the reaction N(2)-formyl-N(1)-(5-phospho-beta-D-ribosyl)glycinamide + L-glutamine + ATP + H2O = 2-formamido-N(1)-(5-O-phospho-beta-D-ribosyl)acetamidine + L-glutamate + ADP + phosphate + H(+). It participates in purine metabolism; IMP biosynthesis via de novo pathway; 5-amino-1-(5-phospho-D-ribosyl)imidazole from N(2)-formyl-N(1)-(5-phospho-D-ribosyl)glycinamide: step 1/2. Its function is as follows. Part of the phosphoribosylformylglycinamidine synthase complex involved in the purines biosynthetic pathway. Catalyzes the ATP-dependent conversion of formylglycinamide ribonucleotide (FGAR) and glutamine to yield formylglycinamidine ribonucleotide (FGAM) and glutamate. The FGAM synthase complex is composed of three subunits. PurQ produces an ammonia molecule by converting glutamine to glutamate. PurL transfers the ammonia molecule to FGAR to form FGAM in an ATP-dependent manner. PurS interacts with PurQ and PurL and is thought to assist in the transfer of the ammonia molecule from PurQ to PurL. The polypeptide is Phosphoribosylformylglycinamidine synthase subunit PurL (Mycobacteroides abscessus (strain ATCC 19977 / DSM 44196 / CCUG 20993 / CIP 104536 / JCM 13569 / NCTC 13031 / TMC 1543 / L948) (Mycobacterium abscessus)).